The chain runs to 842 residues: Non-motile and phage-resistance protein (842 aa).

3 consecutive transmembrane segments (helical) span residues 29–50 (VFVRIAILAALLLLAVYTAFGV), 283–303 (GAFSLLVPLGVGIALALLLMI), and 343–363 (VYLSDVTGAMFGWGGGGVVSG). Positions 318–389 (SERRFRLAVE…QALANAAMYG (72 aa)) constitute a PAS domain. Residues 607–830 (NMSHELRTPL…TVSFTLPVRH (224 aa)) enclose the Histidine kinase domain. His610 bears the Phosphohistidine; by autocatalysis mark.

The protein localises to the cell membrane. The enzyme catalyses ATP + protein L-histidine = ADP + protein N-phospho-L-histidine.. Member of the two-component regulatory system involved in the regulation of polar organelle development. PleC functions as a membrane-associated protein kinase that transfers phosphate to the response regulator PleD, leading to its activation. This chain is Non-motile and phage-resistance protein (pleC), found in Caulobacter vibrioides (strain ATCC 19089 / CIP 103742 / CB 15) (Caulobacter crescentus).